Reading from the N-terminus, the 161-residue chain is Urease accessory protein UreE (161 aa).

A disordered region spans residues 133–161 (EPEAGAYQSAPHSHSHAHDHPFVRLPAHS).

It belongs to the UreE family.

It localises to the cytoplasm. Functionally, involved in urease metallocenter assembly. Binds nickel. Probably functions as a nickel donor during metallocenter assembly. The protein is Urease accessory protein UreE of Pseudomonas putida (strain W619).